Reading from the N-terminus, the 878-residue chain is DNA gyrase subunit A (878 aa).

Residues 34 to 533 (LPDVRDGLKP…NSADINIEDL (500 aa)) enclose the Topo IIA-type catalytic domain. The O-(5'-phospho-DNA)-tyrosine intermediate role is filled by Y122. The short motif at 560-566 (QRRGGKG) is the GyrA-box element. Positions 844–878 (DDEELDAIDGSVAEGDEDIAPEAESDDDVADDADE) are disordered. Over residues 857–878 (EGDEDIAPEAESDDDVADDADE) the composition is skewed to acidic residues.

It belongs to the type II topoisomerase GyrA/ParC subunit family. In terms of assembly, heterotetramer, composed of two GyrA and two GyrB chains. In the heterotetramer, GyrA contains the active site tyrosine that forms a transient covalent intermediate with DNA, while GyrB binds cofactors and catalyzes ATP hydrolysis.

It is found in the cytoplasm. The catalysed reaction is ATP-dependent breakage, passage and rejoining of double-stranded DNA.. In terms of biological role, a type II topoisomerase that negatively supercoils closed circular double-stranded (ds) DNA in an ATP-dependent manner to modulate DNA topology and maintain chromosomes in an underwound state, and also catalyzes the interconversion of other topological isomers of double-stranded DNA rings, including catenanes and knotted rings. Replenishes negative supercoiling downstream of highly transcribed genes to help control overall chromosomal supercoiling density. E.coli makes 15% more negative supercoils in pBR322 plasmid DNA than S.typhimurium; the S.typhimurium GyrB subunit is toxic in E.coli, while the E.coli copy can be expressed in S.typhimurium even though the 2 subunits have 777/804 residues identical. Functionally, negative supercoiling favors strand separation, and DNA replication, transcription, recombination and repair, all of which involve strand separation. Type II topoisomerases break and join 2 DNA strands simultaneously in an ATP-dependent manner. The sequence is that of DNA gyrase subunit A from Salmonella typhimurium (strain LT2 / SGSC1412 / ATCC 700720).